A 180-amino-acid polypeptide reads, in one-letter code: Large ribosomal subunit protein uL6 (180 aa).

It belongs to the universal ribosomal protein uL6 family. Part of the 50S ribosomal subunit.

Functionally, this protein binds to the 23S rRNA, and is important in its secondary structure. It is located near the subunit interface in the base of the L7/L12 stalk, and near the tRNA binding site of the peptidyltransferase center. The sequence is that of Large ribosomal subunit protein uL6 from Clostridioides difficile (strain 630) (Peptoclostridium difficile).